Here is a 291-residue protein sequence, read N- to C-terminus: F-box protein PP2-A12 (291 aa).

One can recognise an F-box domain in the interval 25 to 71 (KPGLGDLPEACVAIIVENLDPVEICRFSKLNRAFRGASWADCVWESK).

The chain is F-box protein PP2-A12 (P2A12) from Arabidopsis thaliana (Mouse-ear cress).